Reading from the N-terminus, the 429-residue chain is Enolase (429 aa).

Gln-162 contacts (2R)-2-phosphoglycerate. Glu-204 (proton donor) is an active-site residue. 3 residues coordinate Mg(2+): Asp-241, Glu-286, and Asp-313. Residues Lys-338, Arg-367, Ser-368, and Lys-389 each coordinate (2R)-2-phosphoglycerate. The active-site Proton acceptor is Lys-338.

Belongs to the enolase family. Requires Mg(2+) as cofactor.

It localises to the cytoplasm. Its subcellular location is the secreted. It is found in the cell surface. It catalyses the reaction (2R)-2-phosphoglycerate = phosphoenolpyruvate + H2O. The protein operates within carbohydrate degradation; glycolysis; pyruvate from D-glyceraldehyde 3-phosphate: step 4/5. Its function is as follows. Catalyzes the reversible conversion of 2-phosphoglycerate (2-PG) into phosphoenolpyruvate (PEP). It is essential for the degradation of carbohydrates via glycolysis. The sequence is that of Enolase from Shouchella clausii (strain KSM-K16) (Alkalihalobacillus clausii).